Here is a 289-residue protein sequence, read N- to C-terminus: ATP synthase gamma chain (289 aa).

Belongs to the ATPase gamma chain family. F-type ATPases have 2 components, CF(1) - the catalytic core - and CF(0) - the membrane proton channel. CF(1) has five subunits: alpha(3), beta(3), gamma(1), delta(1), epsilon(1). CF(0) has three main subunits: a, b and c.

Its subcellular location is the cell inner membrane. In terms of biological role, produces ATP from ADP in the presence of a proton gradient across the membrane. The gamma chain is believed to be important in regulating ATPase activity and the flow of protons through the CF(0) complex. This is ATP synthase gamma chain from Haemophilus influenzae (strain PittEE).